Here is a 301-residue protein sequence, read N- to C-terminus: Protoheme IX farnesyltransferase (301 aa).

The next 9 helical transmembrane spans lie at 20 to 42, 55 to 75, 105 to 125, 126 to 146, 150 to 172, 176 to 198, 227 to 247, 249 to 269, and 280 to 300; these read FTELVKIGIVNSNTITAFTGMWL, VDVIFFTIVGSALIVAASGAF, ALMVALVLGVVGTIMLFMTTW, QAGVLGVIGVFLYVVVYSLYA, LVSNTVIGSFSGAVPPLIGWFAV, FSIVPIMLFLVMFCWQPPHFYAI, MFFWVILLTILPFFMFELGIV, VVLATLLNIGWLALSIYGFKM, and FVYSLNYMTILFVAMVVISIF.

It belongs to the UbiA prenyltransferase family. Protoheme IX farnesyltransferase subfamily. In terms of assembly, interacts with CtaA.

It localises to the cell membrane. The enzyme catalyses heme b + (2E,6E)-farnesyl diphosphate + H2O = Fe(II)-heme o + diphosphate. It participates in porphyrin-containing compound metabolism; heme O biosynthesis; heme O from protoheme: step 1/1. In terms of biological role, converts heme B (protoheme IX) to heme O by substitution of the vinyl group on carbon 2 of heme B porphyrin ring with a hydroxyethyl farnesyl side group. This chain is Protoheme IX farnesyltransferase, found in Listeria monocytogenes serotype 4b (strain CLIP80459).